Consider the following 527-residue polypeptide: MMDLKVDEEEVDSGQPVSIQAFASSSTLHGISHIFSYERLSLKRVVWALCFMGSLALLALVCTNRIQYYFLYPHVTKLDEVAATRLTFPAVTFCNLNEFRFSRVTKNDLYHAGELLALLNNRYEIPDTQTADEKQLEILQDKANFRNFKPKPFNMLEFYDRAGHDIREMLLSCFFRGEQCSPEDFKVVFTRYGKCYTFNAGQDGKPRLITMKGGTGNGLEIMLDIQQDEYLPVWGETDETSFEAGIKVQIHSQDEPPLIDQLGFGVAPGFQTFVSCQEQRLIYLPPPWGDCKATTGDSEFYDTYSITACRIDCETRYLVENCNCRMVHMPGDAPYCTPEQYKECADPALDFLVEKDNEYCVCEMPCNVTRYGKELSMVKIPSKASAKYLAKKYNKSEQYIGENILVLDIFFEALNYETIEQKKAYEVAGLLGDIGGQMGLFIGASILTVLELFDYAYEVIKHRLCRRGKCRKNHKRNNTDKGVALSMDDVKRHNPCESLRGHPAGMTYAANILPHHPARGTFEDFTC.

Topologically, residues 1 to 49 are cytoplasmic; the sequence is MMDLKVDEEEVDSGQPVSIQAFASSSTLHGISHIFSYERLSLKRVVWAL. The helical transmembrane segment at 50-71 threads the bilayer; the sequence is CFMGSLALLALVCTNRIQYYFL. Over 72-424 the chain is Extracellular; it reads YPHVTKLDEV…NYETIEQKKA (353 aa). 7 cysteine pairs are disulfide-bonded: Cys94-Cys195, Cys173-Cys180, Cys291-Cys366, Cys309-Cys362, Cys313-Cys360, Cys322-Cys344, and Cys324-Cys336. 2 N-linked (GlcNAc...) asparagine glycosylation sites follow: Asn367 and Asn394. A discontinuously helical membrane pass occupies residues 425–454; that stretch reads YEVAGLLGDIGGQMGLFIGASILTVLELFD. The short motif at 443–445 is the GAS motif; ion selectivity filter element; sequence GAS. Residues 455-527 lie on the Cytoplasmic side of the membrane; that stretch reads YAYEVIKHRL…ARGTFEDFTC (73 aa).

The protein belongs to the amiloride-sensitive sodium channel (TC 1.A.6) family. ASIC1 subfamily. Homotrimer. Heterotrimer; with other ASIC proteins producing channel with different properties.

It localises to the cell membrane. The protein localises to the postsynaptic cell membrane. Its subcellular location is the cell projection. The protein resides in the dendrite. It catalyses the reaction Na(+)(in) = Na(+)(out). The enzyme catalyses Li(+)(in) = Li(+)(out). The catalysed reaction is K(+)(in) = K(+)(out). It carries out the reaction Ca(2+)(in) = Ca(2+)(out). Inhibited by the diuretic drug amiloride. Inhibited by Cs(1+) ions. Inhibited by the spider venom psalmotoxin-1; this locks the channel into its desensitized conformation. Channel activity is increased by the heterodimeric snake venom neurotoxin composed of MitTx-alpha and MitTx-beta; this slows channel closure and increases the magnitude of the steady-state current that is triggered by low pH. Functionally, forms voltage-independent, pH-gated trimeric sodium channels that act as postsynaptic excitatory receptors in the nervous system, playing a crucial role in regulating synaptic plasticity, learning, and memory. Upon extracellular pH drop this channel elicits transient, fast activating, and completely desensitizing inward currents. Displays high selectivity for sodium ions but can also permit the permeation of other cations. Regulates more or less directly intracellular calcium concentration and CaMKII phosphorylation, and thereby the density of dendritic spines. Modulates neuronal activity in the circuits underlying innate fear. The polypeptide is Acid-sensing ion channel 1 (Gallus gallus (Chicken)).